The chain runs to 69 residues: UPF0337 protein DIP1660 (69 aa).

2 stretches are compositionally biased toward basic and acidic residues: residues 1–19 and 30–41; these read MSDF…KEAV and DEGRADQTKADV. The interval 1–42 is disordered; it reads MSDFENKIEELGGKAKEAVGEATENEQLADEGRADQTKADVK.

The protein belongs to the UPF0337 (CsbD) family.

This chain is UPF0337 protein DIP1660, found in Corynebacterium diphtheriae (strain ATCC 700971 / NCTC 13129 / Biotype gravis).